The sequence spans 470 residues: Glutamate--tRNA ligase (470 aa).

The 'HIGH' region signature appears at 12–22; sequence PSPTGIFHVGG. 4 residues coordinate Zn(2+): C103, C105, C125, and D127. The 'KMSKS' region signature appears at 236–240; the sequence is KLSKR. K239 is a binding site for ATP.

This sequence belongs to the class-I aminoacyl-tRNA synthetase family. Glutamate--tRNA ligase type 1 subfamily. Monomer. Zn(2+) serves as cofactor.

Its subcellular location is the cytoplasm. The catalysed reaction is tRNA(Glu) + L-glutamate + ATP = L-glutamyl-tRNA(Glu) + AMP + diphosphate. In terms of biological role, catalyzes the attachment of glutamate to tRNA(Glu) in a two-step reaction: glutamate is first activated by ATP to form Glu-AMP and then transferred to the acceptor end of tRNA(Glu). This Frankia casuarinae (strain DSM 45818 / CECT 9043 / HFP020203 / CcI3) protein is Glutamate--tRNA ligase.